Here is a 218-residue protein sequence, read N- to C-terminus: UPF0502 protein CJA_1529 (218 aa).

Belongs to the UPF0502 family.

The sequence is that of UPF0502 protein CJA_1529 from Cellvibrio japonicus (strain Ueda107) (Pseudomonas fluorescens subsp. cellulosa).